Here is a 209-residue protein sequence, read N- to C-terminus: Mitotic spindle checkpoint protein MAD2 (209 aa).

Residues 15–198 (HGSAAIVSEF…TKIHKVDTLV (184 aa)) enclose the HORMA domain.

This sequence belongs to the MAD2 family. In terms of assembly, part of the mitotic checkpoint complex (MCC); interacts with MAD1, CDC20-1, CDC20-2 and CDC20-5. Interacts with BUBR1 at chromocenters and with BUB3.1. Interacts with EIF4B3. As to expression, expressed in actively dividing tissues, early in organ development, in young leaves, lateral root primordia and root meristems.

It localises to the nucleus. It is found in the nucleus envelope. The protein localises to the chromosome. Its subcellular location is the centromere. The protein resides in the kinetochore. It localises to the cytoplasm. It is found in the cytoskeleton. The protein localises to the spindle. Its function is as follows. Required for the execution of the mitotic checkpoint which monitors the process of kinetochore-spindle attachment and delays the onset of anaphase when this process is not complete. It inhibits the activity of the anaphase promoting complex by sequestering CDC20 until all chromosomes are aligned at the metaphase plate. The sequence is that of Mitotic spindle checkpoint protein MAD2 from Arabidopsis thaliana (Mouse-ear cress).